Consider the following 417-residue polypeptide: Sterile alpha motif domain-containing protein 14 (417 aa).

Residues 37 to 306 (LLVKGRRHRP…QETKCSYPYH (270 aa)) are disordered. Positions 40-49 (KGRRHRPSRS) are enriched in basic residues. Ser-84 and Ser-108 each carry phosphoserine. The segment covering 138 to 153 (SGSPPRSAPSSDSSPS) has biased composition (low complexity). A compositionally biased stretch (basic and acidic residues) spans 159-173 (PRAEPHSEDDSRDAS). Phosphoserine is present on residues Ser-173 and Ser-179. 2 stretches are compositionally biased toward low complexity: residues 244-260 (SGKG…PTCS) and 276-289 (STLS…SSSP). A Phosphoserine modification is found at Ser-279. Phosphothreonine is present on Thr-283. Residues 326–389 (WTSQQVGQWL…KRKLKELAAA (64 aa)) enclose the SAM domain. A coiled-coil region spans residues 375-416 (DRALVKRKLKELAAAAEKERKAQEKTARQREKLRRREHEAKK). Residues 390–417 (AEKERKAQEKTARQREKLRRREHEAKKS) are disordered.

This chain is Sterile alpha motif domain-containing protein 14 (Samd14), found in Rattus norvegicus (Rat).